We begin with the raw amino-acid sequence, 504 residues long: Anaerobic nitric oxide reductase transcription regulator NorR (504 aa).

The residue at position 57 (Asp-57) is a 4-aspartylphosphate. Positions 187 to 416 (MIGLSPGMTQ…LEHAIHRAVV (230 aa)) constitute a Sigma-54 factor interaction domain. Residues 215–222 (GETGTGKE) and 278–287 (ADNGTLFLDE) each bind ATP. Residues 479–498 (WAACARMLETDVANLHRLAK) constitute a DNA-binding region (H-T-H motif).

It functions in the pathway nitrogen metabolism; nitric oxide reduction. In terms of biological role, required for the expression of anaerobic nitric oxide (NO) reductase, acts as a transcriptional activator for at least the norVW operon. Activation also requires sigma-54. This is Anaerobic nitric oxide reductase transcription regulator NorR from Escherichia coli O6:K15:H31 (strain 536 / UPEC).